The sequence spans 275 residues: Peptidoglycan-N-acetylglucosamine deacetylase BC_1960 (275 aa).

Residues 81–262 (AEVALTFDDG…QLKTKGARFV (182 aa)) form the NodB homology domain. Asp-88 functions as the Proton acceptor in the catalytic mechanism. Residues Asp-89, His-139, and His-143 each coordinate Zn(2+). Pro-179 bears the 2-hydroxyproline; partial mark. The active-site Proton donor is His-233.

The protein belongs to the polysaccharide deacetylase family. The cofactor is Zn(2+). Post-translationally, hydroxylated on Pro-179. Hydroxylation alters the active site and enhances significantly deacetylase activity, probably by creating a more favorable environment for transition-state stabilization. It might be autocatalytic.

It carries out the reaction peptidoglycan-N-acetyl-D-glucosamine + H2O = peptidoglycan-D-glucosamine + acetate.. Deacetylase activity is stimulated by hydroxylation on Pro-179. Inhibited by CuCl(2) and ZnCl(2). Inhibited by the hydroxamate N-hydroxy-4-(naphthalene-1-yl)benzamide (NHNB). Catalyzes the deacetylation of N-acetylglucosamine (GlcNAc) residues in peptidoglycan. Also acts on soluble chitin substrates and N-acetylchitooligomers. Acts on cell wall peptidoglycan from the Gram-positive bacteria B.cereus and B.subtilis and the Gram-negative bacterium H.pylori. Not active on acetylated xylan. The protein is Peptidoglycan-N-acetylglucosamine deacetylase BC_1960 of Bacillus cereus (strain ATCC 14579 / DSM 31 / CCUG 7414 / JCM 2152 / NBRC 15305 / NCIMB 9373 / NCTC 2599 / NRRL B-3711).